Consider the following 167-residue polypeptide: NAD(P)H-quinone oxidoreductase subunit I, chloroplastic (167 aa).

4Fe-4S ferredoxin-type domains are found at residues 55–84 (GRIHFEFDKCIACEVCVRVCPIDLPVVDWK) and 95–124 (LNYSIDFGICIFCGNCVEYCPTNCLSMTEE). [4Fe-4S] cluster is bound by residues C64, C67, C70, C74, C104, C107, C110, and C114.

The protein belongs to the complex I 23 kDa subunit family. In terms of assembly, NDH is composed of at least 16 different subunits, 5 of which are encoded in the nucleus. Requires [4Fe-4S] cluster as cofactor.

It is found in the plastid. The protein resides in the chloroplast thylakoid membrane. The catalysed reaction is a plastoquinone + NADH + (n+1) H(+)(in) = a plastoquinol + NAD(+) + n H(+)(out). It carries out the reaction a plastoquinone + NADPH + (n+1) H(+)(in) = a plastoquinol + NADP(+) + n H(+)(out). Functionally, NDH shuttles electrons from NAD(P)H:plastoquinone, via FMN and iron-sulfur (Fe-S) centers, to quinones in the photosynthetic chain and possibly in a chloroplast respiratory chain. The immediate electron acceptor for the enzyme in this species is believed to be plastoquinone. Couples the redox reaction to proton translocation, and thus conserves the redox energy in a proton gradient. This Gossypium barbadense (Sea Island cotton) protein is NAD(P)H-quinone oxidoreductase subunit I, chloroplastic.